Here is a 183-residue protein sequence, read N- to C-terminus: CASP-like protein UU2 (183 aa).

The Cytoplasmic segment spans residues 1–33 (MEESQQQSSKFDAPPSPYVPSRVYLAQIYWKKP). Residues 34 to 54 (AIVVLRVLQFIFSLIAFSVMA) traverse the membrane as a helical segment. Residues 55-72 (DVLHDVQGSIKSLSYTVA) are Extracellular-facing. The chain crosses the membrane as a helical span at residues 73-93 (IGVLACAYALAQLSFSLWCVI). Topologically, residues 94-118 (RGATSSAGVTPLYQYATFICDQMST) are cytoplasmic. Residues 119–139 (YFLISAASATATLIDVSGVCG) traverse the membrane as a helical segment. Residues 140–156 (SNGSGTNLCSRSTASVT) are Extracellular-facing. The N-linked (GlcNAc...) asparagine glycan is linked to asparagine 141. Residues 157 to 177 (FAFLAFLAFSASSVLTGYYLV) traverse the membrane as a helical segment. Over 178–183 (KCILKA) the chain is Cytoplasmic.

The protein belongs to the Casparian strip membrane proteins (CASP) family. Homodimer and heterodimers.

The protein localises to the cell membrane. In Selaginella moellendorffii (Spikemoss), this protein is CASP-like protein UU2.